The chain runs to 326 residues: Ribosomal large subunit pseudouridine synthase D (326 aa).

The region spanning 18–91 is the S4 RNA-binding domain; the sequence is QRLDQALAEM…IPLDIVYEDD (74 aa). Asp139 is an active-site residue. Positions 183–203 are disordered; that stretch reads GTVNEPISRHPTKRTHMSVHP.

It belongs to the pseudouridine synthase RluA family.

It localises to the cytoplasm. It carries out the reaction uridine(1911/1915/1917) in 23S rRNA = pseudouridine(1911/1915/1917) in 23S rRNA. In terms of biological role, responsible for synthesis of pseudouridine from uracil at positions 1911, 1915 and 1917 in 23S ribosomal RNA. The sequence is that of Ribosomal large subunit pseudouridine synthase D (rluD) from Salmonella typhi.